The primary structure comprises 1160 residues: Nonribosomal peptide synthetase fmqC (1160 aa).

Residues 132 to 520 form an adenylation region; it reads TYRELNDRSS…LGEVEHALQQ (389 aa). One can recognise a Carrier domain in the interval 642 to 719; the sequence is QPVTQLEESL…EMAGMLDGVT (78 aa). An O-(pantetheine 4'-phosphoryl)serine modification is found at Ser679. The condensation stretch occupies residues 749–1025; sequence CTLEDLQEGF…CAAAETPMRI (277 aa).

Belongs to the NRP synthetase family. Interacts with the mitogen-activated protein kinase mpkA. In terms of processing, phosphorylated by mpkA during conidiogenesis.

It localises to the cytoplasm. The protein operates within alkaloid biosynthesis. Its function is as follows. Nonribosomal peptide synthetase; part of the gene cluster that mediates the biosynthesis of the antitumor fumiquinazolines that confer a dual-usage capability to defend against phagocytes in the environment and animal hosts. The simplest member is fumiquinazoline F (FQF) with a 6-6-6 tricyclic core derived from anthranilic acid (Ant), tryptophan (Trp), and alanine (Ala). The trimodular NRPS fmqA is responsible for FQF formation. Modules 1, 2 and 3 of fmqA are predicted to activate and load Ant, Trp and Ala, respectively, providing for the assembly of an Ant-Trp-Ala-S-enzyme intermediate that would undergo double cyclization for chain release and generation of the tricyclic 6-6-6 product fumiquinazoline F. The presence of an E domain predicted for module 2 of fmqA is consistent with epimerization of L-Trp to D-Trp during assembly to generate the R-stereocenter at C14 of FQF. The FAD-dependent monooxygenase fmqB and the monomodular NRPS fmqC then maturate FQF to FQA. FmqB oxidizes the 2',3'-double bond of the indole side chain of FQF, and fmqC activates L-Ala as the adenylate, installs it as the pantetheinyl thioester on its carrier protein domain, and acylates the oxidized indole for subsequent intramolecular cyclization to create the 6-5-5-imidazolindolone of FQA. The FAD-linked oxidoreductase fmqD introduces a third layer of scaffold complexity by converting FQA to the spirohemiaminal FQC, presumably by catalyzing the formation of a transient imine within the pyrazinone ring. FQC subsequently converts nonenzymatically to the known cyclic aminal FQD. In Aspergillus fumigatus (strain ATCC MYA-4609 / CBS 101355 / FGSC A1100 / Af293) (Neosartorya fumigata), this protein is Nonribosomal peptide synthetase fmqC.